The sequence spans 201 residues: Superoxide dismutase [Mn] (201 aa).

Mn(2+)-binding residues include H27, H81, D163, and H167.

Belongs to the iron/manganese superoxide dismutase family. Homodimer. Requires Mn(2+) as cofactor.

Its subcellular location is the secreted. The enzyme catalyses 2 superoxide + 2 H(+) = H2O2 + O2. Destroys superoxide anion radicals which are normally produced within the cells and which are toxic to biological systems. In Streptococcus pyogenes serotype M18 (strain MGAS8232), this protein is Superoxide dismutase [Mn] (sodA).